We begin with the raw amino-acid sequence, 252 residues long: Chaperone protein AggD (252 aa).

The N-terminal stretch at 1-22 (MKIRRIVSTIAIALSVFTFAHA) is a signal peptide.

This sequence belongs to the periplasmic pilus chaperone family.

It is found in the periplasm. In terms of biological role, involved in the biogenesis of the AAF/I fimbriae. The polypeptide is Chaperone protein AggD (aggD) (Escherichia coli).